Reading from the N-terminus, the 329-residue chain is SLAM family member 5 (329 aa).

The first 21 residues, Met-1–Gly-21, serve as a signal peptide directing secretion. The Extracellular portion of the chain corresponds to Lys-22–Val-221. In terms of domain architecture, Ig-like V-type spans Pro-26–Leu-129. The Ig-like C2-type domain occupies Pro-132–Gln-206. An N-linked (GlcNAc...) asparagine glycan is attached at Asn-147. Cysteines 152 and 190 form a disulfide. The chain crosses the membrane as a helical span at residues Leu-222–Phe-242. Residues Arg-243–Val-329 lie on the Cytoplasmic side of the membrane. The short motif at Thr-263 to Val-268 is the ITSM 1 element. A Phosphotyrosine modification is found at Tyr-265. Residue Tyr-280 is modified to Phosphotyrosine; by LYN. The ITSM 2 motif lies at Thr-298 to Val-303. Tyr-300 bears the Phosphotyrosine mark.

Homodimer; via its extracellular domain. Forms a head to tail dimer with a CD48 molecule from another cell. Interacts with SH2 domain-containing proteins SH2D1A/SAP and SH2D1B/EAT-2. Interacts with tyrosine-protein phosphatases PTPN6/SHP-1 and PTPN11/SHP-2 via its phosphorylated cytoplasmic domain, and this interaction is blocked by SH2D1A. Post-translationally, phosphorylated by tyrosine-protein kinase LCK on tyrosine residues following ligation induced by agonist monoclonal antibody. The association with SH2D1A/SAP is dependent of tyrosine phosphorylation of its cytoplasmic domain. Phosphorylated on Tyr-280 and Tyr-300 following platelet aggregation. Phosphorylated on tyrosine residues upon high affinity immunoglobulin epsilon receptor aggregation in mast cells. In terms of processing, N-glycosylated. Predominantly expressed in hematopoietic tissues such as lymph node, spleen, thymus, and bone marrow. Detected also in lung.

The protein resides in the cell membrane. Its function is as follows. Self-ligand receptor of the signaling lymphocytic activation molecule (SLAM) family. SLAM receptors triggered by homo- or heterotypic cell-cell interactions are modulating the activation and differentiation of a wide variety of immune cells and thus are involved in the regulation and interconnection of both innate and adaptive immune response. Activities are controlled by presence or absence of small cytoplasmic adapter proteins, SH2D1A/SAP and/or SH2D1B/EAT-2. Can mediate natural killer (NK) cell cytotoxicity dependent on SH2D1A and SH2D1B. Increases proliferative responses of activated T-cells and SH2D1A/SAP does not seen be required for this process. Homophilic interactions enhance interferon gamma/IFNG secretion in lymphocytes and induce platelet stimulation via a SH2D1A/SAP-dependent pathway. May serve as a marker for hematopoietic progenitor cells. Required for a prolonged T-cell:B-cell contact, optimal T follicular helper function, and germinal center formation. In germinal centers involved in maintaining B cell tolerance and in preventing autoimmunity. In mast cells negatively regulates high affinity immunoglobulin epsilon receptor signaling; independent of SH2D1A and SH2D1B but implicating FES and PTPN6/SHP-1. In macrophages enhances LPS-induced MAPK phosphorylation and NF-kappaB activation and modulates LPS-induced cytokine secretion; involving ITSM 2. Positively regulates macroautophagy in primary dendritic cells via stabilization of IRF8; inhibits TRIM21-mediated proteasomal degradation of IRF8. In Mus musculus (Mouse), this protein is SLAM family member 5 (Cd84).